Reading from the N-terminus, the 143-residue chain is Transcriptional regulator MraZ (143 aa).

SpoVT-AbrB domains are found at residues 5–47 (EYQH…PLTE) and 76–119 (AMEG…AKER).

Belongs to the MraZ family. In terms of assembly, forms oligomers.

The protein resides in the cytoplasm. It localises to the nucleoid. This Lactobacillus delbrueckii subsp. bulgaricus (strain ATCC 11842 / DSM 20081 / BCRC 10696 / JCM 1002 / NBRC 13953 / NCIMB 11778 / NCTC 12712 / WDCM 00102 / Lb 14) protein is Transcriptional regulator MraZ.